The chain runs to 71 residues: Small ribosomal subunit protein bS21 (71 aa).

Belongs to the bacterial ribosomal protein bS21 family.

In Blochmanniella pennsylvanica (strain BPEN), this protein is Small ribosomal subunit protein bS21.